A 513-amino-acid chain; its full sequence is Cytochrome P450 77A3 (513 aa).

Residue C451 coordinates heme.

This sequence belongs to the cytochrome P450 family. Heme is required as a cofactor.

The polypeptide is Cytochrome P450 77A3 (CYP77A3) (Glycine max (Soybean)).